We begin with the raw amino-acid sequence, 250 residues long: 5-oxoprolinase subunit A (250 aa).

Belongs to the LamB/PxpA family. Forms a complex composed of PxpA, PxpB and PxpC.

It carries out the reaction 5-oxo-L-proline + ATP + 2 H2O = L-glutamate + ADP + phosphate + H(+). Catalyzes the cleavage of 5-oxoproline to form L-glutamate coupled to the hydrolysis of ATP to ADP and inorganic phosphate. The chain is 5-oxoprolinase subunit A from Staphylococcus aureus (strain Mu3 / ATCC 700698).